The sequence spans 156 residues: Small ribosomal subunit protein uS7c (156 aa).

This sequence belongs to the universal ribosomal protein uS7 family. In terms of assembly, part of the 30S ribosomal subunit.

The protein localises to the plastid. It is found in the chloroplast. One of the primary rRNA binding proteins, it binds directly to 16S rRNA where it nucleates assembly of the head domain of the 30S subunit. The sequence is that of Small ribosomal subunit protein uS7c (rps7) from Chlorella vulgaris (Green alga).